Consider the following 508-residue polypeptide: DNA-directed RNA polymerase subunit Rpo1C (508 aa).

The unknown stretch occupies residues 1-123; that stretch reads MASLLWRDTS…EIKEKYGENL (123 aa). The DNA-directed RNA polymerase subunit Rpo1C stretch occupies residues 124–508; it reads SEDVQKVLDD…IYKGYPKTKK (385 aa).

This sequence belongs to the RNA polymerase beta' chain family. As to quaternary structure, part of the RNA polymerase complex.

The protein localises to the cytoplasm. The catalysed reaction is RNA(n) + a ribonucleoside 5'-triphosphate = RNA(n+1) + diphosphate. Functionally, DNA-dependent RNA polymerase (RNAP) catalyzes the transcription of DNA into RNA using the four ribonucleoside triphosphates as substrates. Forms part of the jaw domain. The polypeptide is DNA-directed RNA polymerase subunit Rpo1C (Thermoplasma acidophilum (strain ATCC 25905 / DSM 1728 / JCM 9062 / NBRC 15155 / AMRC-C165)).